A 115-amino-acid polypeptide reads, in one-letter code: Phosphoribosyl-AMP cyclohydrolase (115 aa).

Residue D80 coordinates Mg(2+). C81 contacts Zn(2+). Residues D82 and D84 each contribute to the Mg(2+) site. Residues C97 and C104 each coordinate Zn(2+).

This sequence belongs to the PRA-CH family. Homodimer. It depends on Mg(2+) as a cofactor. Zn(2+) is required as a cofactor.

The protein resides in the cytoplasm. The catalysed reaction is 1-(5-phospho-beta-D-ribosyl)-5'-AMP + H2O = 1-(5-phospho-beta-D-ribosyl)-5-[(5-phospho-beta-D-ribosylamino)methylideneamino]imidazole-4-carboxamide. The protein operates within amino-acid biosynthesis; L-histidine biosynthesis; L-histidine from 5-phospho-alpha-D-ribose 1-diphosphate: step 3/9. Its function is as follows. Catalyzes the hydrolysis of the adenine ring of phosphoribosyl-AMP. This chain is Phosphoribosyl-AMP cyclohydrolase, found in Mycolicibacterium paratuberculosis (strain ATCC BAA-968 / K-10) (Mycobacterium paratuberculosis).